The following is a 492-amino-acid chain: Homoserine O-acetyltransferase (492 aa).

Residues 47-352 (NAILVFHALS…KSIYGHDAFL (306 aa)) form the AB hydrolase-1 domain. Residue Ser152 is the Nucleophile of the active site. Arg221 provides a ligand contact to substrate. Catalysis depends on residues Asp315 and His348. Asp349 contributes to the substrate binding site. CBS domains follow at residues 375–431 (MTKN…ENSI) and 440–492 (MTKN…TITI).

It belongs to the AB hydrolase superfamily. MetX family. As to quaternary structure, homodimer.

Its subcellular location is the cytoplasm. The enzyme catalyses L-homoserine + acetyl-CoA = O-acetyl-L-homoserine + CoA. Its pathway is amino-acid biosynthesis; L-methionine biosynthesis via de novo pathway; O-acetyl-L-homoserine from L-homoserine: step 1/1. Transfers an acetyl group from acetyl-CoA to L-homoserine, forming acetyl-L-homoserine. The protein is Homoserine O-acetyltransferase of Methanococcus vannielii (strain ATCC 35089 / DSM 1224 / JCM 13029 / OCM 148 / SB).